The chain runs to 249 residues: 3-deoxy-manno-octulosonate cytidylyltransferase (249 aa).

The protein belongs to the KdsB family.

The protein localises to the cytoplasm. It carries out the reaction 3-deoxy-alpha-D-manno-oct-2-ulosonate + CTP = CMP-3-deoxy-beta-D-manno-octulosonate + diphosphate. The protein operates within nucleotide-sugar biosynthesis; CMP-3-deoxy-D-manno-octulosonate biosynthesis; CMP-3-deoxy-D-manno-octulosonate from 3-deoxy-D-manno-octulosonate and CTP: step 1/1. It participates in bacterial outer membrane biogenesis; lipopolysaccharide biosynthesis. Its function is as follows. Activates KDO (a required 8-carbon sugar) for incorporation into bacterial lipopolysaccharide in Gram-negative bacteria. The sequence is that of 3-deoxy-manno-octulosonate cytidylyltransferase from Coxiella burnetii (strain RSA 331 / Henzerling II).